A 510-amino-acid chain; its full sequence is NAD(P)H-quinone oxidoreductase subunit 2 A, chloroplastic (510 aa).

Transmembrane regions (helical) follow at residues Leu31 to Thr51, Ile57 to Phe77, Ile99 to Ile119, Met124 to Cys144, Leu149 to Tyr169, Leu184 to Leu204, Ile229 to Phe249, Pro261 to Thr281, Trp295 to Ile315, Met323 to Asp343, Tyr354 to Leu374, Ala395 to Phe415, Leu418 to Leu438, and Met484 to Ile504.

The protein belongs to the complex I subunit 2 family. As to quaternary structure, NDH is composed of at least 16 different subunits, 5 of which are encoded in the nucleus.

It localises to the plastid. The protein resides in the chloroplast thylakoid membrane. It carries out the reaction a plastoquinone + NADH + (n+1) H(+)(in) = a plastoquinol + NAD(+) + n H(+)(out). It catalyses the reaction a plastoquinone + NADPH + (n+1) H(+)(in) = a plastoquinol + NADP(+) + n H(+)(out). Its function is as follows. NDH shuttles electrons from NAD(P)H:plastoquinone, via FMN and iron-sulfur (Fe-S) centers, to quinones in the photosynthetic chain and possibly in a chloroplast respiratory chain. The immediate electron acceptor for the enzyme in this species is believed to be plastoquinone. Couples the redox reaction to proton translocation, and thus conserves the redox energy in a proton gradient. The protein is NAD(P)H-quinone oxidoreductase subunit 2 A, chloroplastic of Nicotiana tabacum (Common tobacco).